Consider the following 158-residue polypeptide: 2-C-methyl-D-erythritol 2,4-cyclodiphosphate synthase (158 aa).

The a divalent metal cation site is built by D9 and H11. Residues 9–11 (DVH) and 35–36 (HS) each bind 4-CDP-2-C-methyl-D-erythritol 2-phosphate. A divalent metal cation is bound at residue H43. 4-CDP-2-C-methyl-D-erythritol 2-phosphate-binding positions include 57-59 (DIG), 62-66 (FPDTD), 101-107 (AQKPKML), 133-136 (TTTE), F140, and R143.

This sequence belongs to the IspF family. In terms of assembly, homotrimer. Requires a divalent metal cation as cofactor.

The enzyme catalyses 4-CDP-2-C-methyl-D-erythritol 2-phosphate = 2-C-methyl-D-erythritol 2,4-cyclic diphosphate + CMP. The protein operates within isoprenoid biosynthesis; isopentenyl diphosphate biosynthesis via DXP pathway; isopentenyl diphosphate from 1-deoxy-D-xylulose 5-phosphate: step 4/6. In terms of biological role, involved in the biosynthesis of isopentenyl diphosphate (IPP) and dimethylallyl diphosphate (DMAPP), two major building blocks of isoprenoid compounds. Catalyzes the conversion of 4-diphosphocytidyl-2-C-methyl-D-erythritol 2-phosphate (CDP-ME2P) to 2-C-methyl-D-erythritol 2,4-cyclodiphosphate (ME-CPP) with a corresponding release of cytidine 5-monophosphate (CMP). The chain is 2-C-methyl-D-erythritol 2,4-cyclodiphosphate synthase from Bacillus subtilis (strain 168).